Consider the following 345-residue polypeptide: Phosphoribosylformylglycinamidine cyclo-ligase (345 aa).

This sequence belongs to the AIR synthase family.

Its subcellular location is the cytoplasm. It catalyses the reaction 2-formamido-N(1)-(5-O-phospho-beta-D-ribosyl)acetamidine + ATP = 5-amino-1-(5-phospho-beta-D-ribosyl)imidazole + ADP + phosphate + H(+). It functions in the pathway purine metabolism; IMP biosynthesis via de novo pathway; 5-amino-1-(5-phospho-D-ribosyl)imidazole from N(2)-formyl-N(1)-(5-phospho-D-ribosyl)glycinamide: step 2/2. The chain is Phosphoribosylformylglycinamidine cyclo-ligase from Shigella dysenteriae serotype 1 (strain Sd197).